The following is a 312-amino-acid chain: Fibrinogen-like protein 1 (312 aa).

Residues 1–22 (MAKVFSFILVTTALTMGREISA) form the signal peptide. Positions 23-61 (LEDCAQEQMRLRAQVRLLETRVKQQQVKIKQLLQENEVQ) form a coiled coil. In terms of domain architecture, Fibrinogen C-terminal spans 74–306 (LGSKRQYADC…SVVMKIRPND (233 aa)). 2 disulfides stabilise this stretch: Cys-83–Cys-112 and Cys-248–Cys-261.

Homodimer. Interacts (via the Fibrinogen C-terminal domain) with LAG3 (via Ig-like domains 1 and 2). Under normal conditions, liver-specific.

It localises to the secreted. Functionally, immune suppressive molecule that inhibits antigen-specific T-cell activation by acting as a major ligand of LAG3. Responsible for LAG3 T-cell inhibitory function. Binds LAG3 independently from MHC class II (MHC-II). Secreted by, and promotes growth of, hepatocytes. The sequence is that of Fibrinogen-like protein 1 from Homo sapiens (Human).